We begin with the raw amino-acid sequence, 1399 residues long: DNA-directed RNA polymerase subunit beta' (1399 aa).

Cysteine 70, cysteine 72, cysteine 85, and cysteine 88 together coordinate Zn(2+). The Mg(2+) site is built by aspartate 460, aspartate 462, and aspartate 464. 4 residues coordinate Zn(2+): cysteine 814, cysteine 888, cysteine 895, and cysteine 898.

Belongs to the RNA polymerase beta' chain family. The RNAP catalytic core consists of 2 alpha, 1 beta, 1 beta' and 1 omega subunit. When a sigma factor is associated with the core the holoenzyme is formed, which can initiate transcription. The cofactor is Mg(2+). Zn(2+) serves as cofactor.

The catalysed reaction is RNA(n) + a ribonucleoside 5'-triphosphate = RNA(n+1) + diphosphate. Its function is as follows. DNA-dependent RNA polymerase catalyzes the transcription of DNA into RNA using the four ribonucleoside triphosphates as substrates. This chain is DNA-directed RNA polymerase subunit beta', found in Pseudomonas fluorescens (strain Pf0-1).